A 219-amino-acid chain; its full sequence is Leukocyte surface antigen CD53 (219 aa).

Residues 2–11 (GMSSLKLLKY) lie on the Cytoplasmic side of the membrane. A helical transmembrane segment spans residues 12–32 (VLFFFNFLFWVCGCCILGFGI). At 33–54 (HLLVQNTYGILFRNLPFLTLGN) the chain is on the extracellular side. The chain crosses the membrane as a helical span at residues 55–69 (VLVIVGSIIMVVAFL). Residues 70-80 (GCMGSIKENKC) are Cytoplasmic-facing. Residues 81–106 (LLMSFFVLLLLILLAEVTLAILLFVY) form a helical membrane-spanning segment. Topologically, residues 107–181 (EKKINTLVAE…KKGQAWFHSN (75 aa)) are extracellular. Asn119, Asn129, and Asn148 each carry an N-linked (GlcNAc...) asparagine glycan. A helical transmembrane segment spans residues 182-206 (FLYIGIVTICVCVIQVLGMSFALTL). Residues 207–219 (NCQIDKTSQALGL) are Cytoplasmic-facing.

The protein belongs to the tetraspanin (TM4SF) family. Interacts with SCIMP. Interacts with CD45/PTPRC. Interacts with IL7R. Interacts with RBL2 and PPP2CA. Spleen and thymus, B-cells, monocytes, macrophages, neutrophils, single (CD4 or CD8) positive thymocytes, peripheral T-cells.

It localises to the cell membrane. It is found in the cell junction. The protein resides in the membrane. Functionally, required for efficient formation of myofibers in regenerating muscle at the level of cell fusion. May be involved in growth regulation in hematopoietic cells. The polypeptide is Leukocyte surface antigen CD53 (Cd53) (Rattus norvegicus (Rat)).